The chain runs to 911 residues: DNA mismatch repair protein MutS (911 aa).

660-667 is a binding site for ATP; sequence GPNMAGKS.

The protein belongs to the DNA mismatch repair MutS family.

This protein is involved in the repair of mismatches in DNA. It is possible that it carries out the mismatch recognition step. This protein has a weak ATPase activity. The protein is DNA mismatch repair protein MutS of Rhodopseudomonas palustris (strain HaA2).